The following is a 525-amino-acid chain: D-arabinono-1,4-lactone oxidase (525 aa).

The region spanning 23 to 197 (YSCRPQLYFQ…VKATIRVIPE (175 aa)) is the FAD-binding PCMH-type domain. H60 bears the Pros-8alpha-FAD histidine mark.

It belongs to the oxygen-dependent FAD-linked oxidoreductase family. Requires FAD as cofactor.

It is found in the mitochondrion membrane. The catalysed reaction is D-arabinono-1,4-lactone + O2 = dehydro-D-arabinono-1,4-lactone + H2O2 + H(+). The protein operates within cofactor biosynthesis; D-erythroascorbate biosynthesis; dehydro-D-arabinono-1,4-lactone from D-arabinose: step 2/2. This Kluyveromyces lactis (strain ATCC 8585 / CBS 2359 / DSM 70799 / NBRC 1267 / NRRL Y-1140 / WM37) (Yeast) protein is D-arabinono-1,4-lactone oxidase (ALO1).